Here is a 303-residue protein sequence, read N- to C-terminus: Aspartate carbamoyltransferase catalytic subunit (303 aa).

Residues Arg48 and Thr49 each coordinate carbamoyl phosphate. An L-aspartate-binding site is contributed by Lys76. Carbamoyl phosphate-binding residues include Arg98, His129, and Gln132. Positions 162 and 214 each coordinate L-aspartate. Carbamoyl phosphate is bound by residues Ala257 and Pro258.

This sequence belongs to the aspartate/ornithine carbamoyltransferase superfamily. ATCase family. In terms of assembly, heterododecamer (2C3:3R2) of six catalytic PyrB chains organized as two trimers (C3), and six regulatory PyrI chains organized as three dimers (R2).

It carries out the reaction carbamoyl phosphate + L-aspartate = N-carbamoyl-L-aspartate + phosphate + H(+). Its pathway is pyrimidine metabolism; UMP biosynthesis via de novo pathway; (S)-dihydroorotate from bicarbonate: step 2/3. In terms of biological role, catalyzes the condensation of carbamoyl phosphate and aspartate to form carbamoyl aspartate and inorganic phosphate, the committed step in the de novo pyrimidine nucleotide biosynthesis pathway. The sequence is that of Aspartate carbamoyltransferase catalytic subunit from Leuconostoc citreum (strain KM20).